Consider the following 248-residue polypeptide: Probable transcriptional regulatory protein Oter_1471 (248 aa).

Belongs to the TACO1 family.

It localises to the cytoplasm. This chain is Probable transcriptional regulatory protein Oter_1471, found in Opitutus terrae (strain DSM 11246 / JCM 15787 / PB90-1).